The chain runs to 338 residues: S-adenosylmethionine:tRNA ribosyltransferase-isomerase (338 aa).

This sequence belongs to the QueA family. Monomer.

The protein resides in the cytoplasm. The catalysed reaction is 7-aminomethyl-7-carbaguanosine(34) in tRNA + S-adenosyl-L-methionine = epoxyqueuosine(34) in tRNA + adenine + L-methionine + 2 H(+). It participates in tRNA modification; tRNA-queuosine biosynthesis. Transfers and isomerizes the ribose moiety from AdoMet to the 7-aminomethyl group of 7-deazaguanine (preQ1-tRNA) to give epoxyqueuosine (oQ-tRNA). This is S-adenosylmethionine:tRNA ribosyltransferase-isomerase from Francisella tularensis subsp. holarctica (strain FTNF002-00 / FTA).